Consider the following 234-residue polypeptide: uncharacterized protein (234 aa).

The segment at glycine 212–glycine 234 is disordered. Residues asparagine 220–glycine 234 are compositionally biased toward low complexity.

This is an uncharacterized protein from Methanothermobacter thermautotrophicus (Methanobacterium thermoformicicum).